The sequence spans 150 residues: Putative HTH-type transcriptional regulator rrf2-like (150 aa).

In terms of domain architecture, HTH rrf2-type spans 1–139; it reads MITQKMKYAL…DSLTLEDMLA (139 aa).

The chain is Putative HTH-type transcriptional regulator rrf2-like from Rhodobacter capsulatus (strain ATCC BAA-309 / NBRC 16581 / SB1003).